Here is a 430-residue protein sequence, read N- to C-terminus: Adenylosuccinate synthetase (430 aa).

GTP-binding positions include 12–18 and 40–42; these read GDEGKGK and GHT. D13 acts as the Proton acceptor in catalysis. Mg(2+) is bound by residues D13 and G40. IMP-binding positions include 13 to 16, 38 to 41, T130, R144, Q225, T240, and R304; these read DEGK and NAGH. H41 (proton donor) is an active-site residue. Residue 300 to 306 participates in substrate binding; that stretch reads STTGRPR. Residues R306, 332 to 334, and 414 to 416 each bind GTP; these read KLD and SVG.

It belongs to the adenylosuccinate synthetase family. Homodimer. Mg(2+) is required as a cofactor.

It is found in the cytoplasm. It catalyses the reaction IMP + L-aspartate + GTP = N(6)-(1,2-dicarboxyethyl)-AMP + GDP + phosphate + 2 H(+). It participates in purine metabolism; AMP biosynthesis via de novo pathway; AMP from IMP: step 1/2. In terms of biological role, plays an important role in the de novo pathway of purine nucleotide biosynthesis. Catalyzes the first committed step in the biosynthesis of AMP from IMP. The polypeptide is Adenylosuccinate synthetase (Pelobacter propionicus (strain DSM 2379 / NBRC 103807 / OttBd1)).